Reading from the N-terminus, the 561-residue chain is Dihydroxy-acid dehydratase (561 aa).

Asp-78 provides a ligand contact to Mg(2+). Cys-119 is a binding site for [2Fe-2S] cluster. Residues Asp-120 and Lys-121 each coordinate Mg(2+). Lys-121 bears the N6-carboxylysine mark. Cys-192 serves as a coordination point for [2Fe-2S] cluster. Glu-448 is a binding site for Mg(2+). Ser-474 serves as the catalytic Proton acceptor.

It belongs to the IlvD/Edd family. Homodimer. The cofactor is [2Fe-2S] cluster. Requires Mg(2+) as cofactor.

The catalysed reaction is (2R)-2,3-dihydroxy-3-methylbutanoate = 3-methyl-2-oxobutanoate + H2O. It carries out the reaction (2R,3R)-2,3-dihydroxy-3-methylpentanoate = (S)-3-methyl-2-oxopentanoate + H2O. It functions in the pathway amino-acid biosynthesis; L-isoleucine biosynthesis; L-isoleucine from 2-oxobutanoate: step 3/4. It participates in amino-acid biosynthesis; L-valine biosynthesis; L-valine from pyruvate: step 3/4. Its function is as follows. Functions in the biosynthesis of branched-chain amino acids. Catalyzes the dehydration of (2R,3R)-2,3-dihydroxy-3-methylpentanoate (2,3-dihydroxy-3-methylvalerate) into 2-oxo-3-methylpentanoate (2-oxo-3-methylvalerate) and of (2R)-2,3-dihydroxy-3-methylbutanoate (2,3-dihydroxyisovalerate) into 2-oxo-3-methylbutanoate (2-oxoisovalerate), the penultimate precursor to L-isoleucine and L-valine, respectively. The chain is Dihydroxy-acid dehydratase from Sulfurimonas denitrificans (strain ATCC 33889 / DSM 1251) (Thiomicrospira denitrificans (strain ATCC 33889 / DSM 1251)).